The following is a 303-amino-acid chain: UDP-3-O-acyl-N-acetylglucosamine deacetylase (303 aa).

The Zn(2+) site is built by histidine 78, histidine 237, and aspartate 241. Histidine 264 acts as the Proton donor in catalysis.

It belongs to the LpxC family. Requires Zn(2+) as cofactor.

It carries out the reaction a UDP-3-O-[(3R)-3-hydroxyacyl]-N-acetyl-alpha-D-glucosamine + H2O = a UDP-3-O-[(3R)-3-hydroxyacyl]-alpha-D-glucosamine + acetate. Its pathway is glycolipid biosynthesis; lipid IV(A) biosynthesis; lipid IV(A) from (3R)-3-hydroxytetradecanoyl-[acyl-carrier-protein] and UDP-N-acetyl-alpha-D-glucosamine: step 2/6. Catalyzes the hydrolysis of UDP-3-O-myristoyl-N-acetylglucosamine to form UDP-3-O-myristoylglucosamine and acetate, the committed step in lipid A biosynthesis. This is UDP-3-O-acyl-N-acetylglucosamine deacetylase from Chromohalobacter salexigens (strain ATCC BAA-138 / DSM 3043 / CIP 106854 / NCIMB 13768 / 1H11).